A 391-amino-acid chain; its full sequence is Elongation factor Tu (391 aa).

Residues 10-201 (KPHVNIGTIG…QVDAYIPTPV (192 aa)) form the tr-type G domain. The tract at residues 19-26 (GHVDHGKT) is G1. 19–26 (GHVDHGKT) provides a ligand contact to GTP. A Mg(2+)-binding site is contributed by T26. Residues 55 to 59 (GITIS) form a G2 region. Residues 76–79 (DCPG) form a G3 region. GTP is bound by residues 76-80 (DCPGH) and 131-134 (NKVD). The tract at residues 131–134 (NKVD) is G4. The segment at 169 to 171 (SAL) is G5.

It belongs to the TRAFAC class translation factor GTPase superfamily. Classic translation factor GTPase family. EF-Tu/EF-1A subfamily. Monomer.

The protein resides in the cytoplasm. The catalysed reaction is GTP + H2O = GDP + phosphate + H(+). GTP hydrolase that promotes the GTP-dependent binding of aminoacyl-tRNA to the A-site of ribosomes during protein biosynthesis. This is Elongation factor Tu from Mesorhizobium japonicum (strain LMG 29417 / CECT 9101 / MAFF 303099) (Mesorhizobium loti (strain MAFF 303099)).